A 304-amino-acid polypeptide reads, in one-letter code: Probable endonuclease 4 (304 aa).

Zn(2+)-binding residues include histidine 75, histidine 115, glutamate 151, aspartate 185, histidine 188, histidine 221, aspartate 234, histidine 236, and glutamate 266.

The protein belongs to the AP endonuclease 2 family. Zn(2+) is required as a cofactor.

It carries out the reaction Endonucleolytic cleavage to 5'-phosphooligonucleotide end-products.. In terms of biological role, endonuclease IV plays a role in DNA repair. It cleaves phosphodiester bonds at apurinic or apyrimidinic (AP) sites, generating a 3'-hydroxyl group and a 5'-terminal sugar phosphate. The protein is Probable endonuclease 4 of Ureaplasma urealyticum serovar 10 (strain ATCC 33699 / Western).